The primary structure comprises 645 residues: Mediator of RNA polymerase II transcription subunit 17 (645 aa).

Residues 215–234 (KAEDEESGSPPASPSGSGAA) form a disordered region. Over residues 222–234 (GSPPASPSGSGAA) the composition is skewed to low complexity.

This sequence belongs to the Mediator complex subunit 17 family. As to quaternary structure, component of the Mediator complex.

Its subcellular location is the nucleus. Component of the Mediator complex, a coactivator involved in the regulated transcription of nearly all RNA polymerase II-dependent genes. Mediator functions as a bridge to convey information from gene-specific regulatory proteins to the basal RNA polymerase II transcription machinery. Mediator is recruited to promoters by direct interactions with regulatory proteins and serves as a scaffold for the assembly of a functional preinitiation complex with RNA polymerase II and the general transcription factors. The protein is Mediator of RNA polymerase II transcription subunit 17 (MED17) of Anopheles gambiae (African malaria mosquito).